A 141-amino-acid chain; its full sequence is Nucleoside diphosphate kinase (141 aa).

Lys-11, Phe-59, Arg-87, Thr-93, Arg-104, and Asn-114 together coordinate ATP. The Pros-phosphohistidine intermediate role is filled by His-117.

This sequence belongs to the NDK family. As to quaternary structure, homotetramer. The cofactor is Mg(2+).

It localises to the cytoplasm. The enzyme catalyses a 2'-deoxyribonucleoside 5'-diphosphate + ATP = a 2'-deoxyribonucleoside 5'-triphosphate + ADP. It carries out the reaction a ribonucleoside 5'-diphosphate + ATP = a ribonucleoside 5'-triphosphate + ADP. Its function is as follows. Major role in the synthesis of nucleoside triphosphates other than ATP. The ATP gamma phosphate is transferred to the NDP beta phosphate via a ping-pong mechanism, using a phosphorylated active-site intermediate. The polypeptide is Nucleoside diphosphate kinase (Acidithiobacillus ferrooxidans (strain ATCC 53993 / BNL-5-31) (Leptospirillum ferrooxidans (ATCC 53993))).